We begin with the raw amino-acid sequence, 500 residues long: Toluene-4-monooxygenase system, hydroxylase component subunit alpha (500 aa).

Residues Glu-104, Glu-134, His-137, Glu-197, Glu-231, and His-234 each coordinate Fe cation.

This sequence belongs to the TmoA/XamoA family. As to quaternary structure, the alkene monooxygenase multicomponent enzyme system is composed of an electron transfer component and a monooxygenase component interacting with the effector protein TmoD. The electron transfer component is composed of a ferredoxin reductase (TmoF) and a ferredoxin (TmoC), and the monooxygenase component is formed by a heterohexamer (dimer of heterotrimers) of two alpha subunits (TmoA), two beta subunits (TmoE) and two gamma subunits (TmoB). Fe(2+) serves as cofactor.

The catalysed reaction is toluene + NADH + O2 + H(+) = 4-methylphenol + NAD(+) + H2O. The protein operates within xenobiotic degradation; toluene degradation. Inhibited by Zn(2+) and Cu(2+). Functionally, component of the toluene-4-monooxygenase multicomponent enzyme system which catalyzes the O2- and NADH-dependent hydroxylation of toluene to form p-cresol. Also able to convert benzene to phenol, catechol, and 1,2,3-trihydroxybenzene by successive hydroxylations. The chain is Toluene-4-monooxygenase system, hydroxylase component subunit alpha from Ectopseudomonas mendocina (Pseudomonas mendocina).